Reading from the N-terminus, the 360-residue chain is Probable dual-specificity RNA methyltransferase RlmN (360 aa).

Catalysis depends on Glu-103, which acts as the Proton acceptor. A Radical SAM core domain is found at 109-342 (HEYGNSVCVT…VTIRREQGHD (234 aa)). A disulfide bond links Cys-116 and Cys-347. [4Fe-4S] cluster-binding residues include Cys-123, Cys-127, and Cys-130. S-adenosyl-L-methionine-binding positions include 173-174 (GE), Ser-205, 228-230 (SLH), and Asn-304. Cys-347 acts as the S-methylcysteine intermediate in catalysis.

This sequence belongs to the radical SAM superfamily. RlmN family. Requires [4Fe-4S] cluster as cofactor.

It is found in the cytoplasm. The enzyme catalyses adenosine(2503) in 23S rRNA + 2 reduced [2Fe-2S]-[ferredoxin] + 2 S-adenosyl-L-methionine = 2-methyladenosine(2503) in 23S rRNA + 5'-deoxyadenosine + L-methionine + 2 oxidized [2Fe-2S]-[ferredoxin] + S-adenosyl-L-homocysteine. It catalyses the reaction adenosine(37) in tRNA + 2 reduced [2Fe-2S]-[ferredoxin] + 2 S-adenosyl-L-methionine = 2-methyladenosine(37) in tRNA + 5'-deoxyadenosine + L-methionine + 2 oxidized [2Fe-2S]-[ferredoxin] + S-adenosyl-L-homocysteine. Its function is as follows. Specifically methylates position 2 of adenine 2503 in 23S rRNA and position 2 of adenine 37 in tRNAs. This is Probable dual-specificity RNA methyltransferase RlmN from Bacillus pumilus (strain SAFR-032).